We begin with the raw amino-acid sequence, 187 residues long: Ribosome maturation factor RimM (187 aa).

The PRC barrel domain maps to 95–178 (DEDEFFYADL…GLVEDKDESL (84 aa)).

Belongs to the RimM family. Binds ribosomal protein uS19.

The protein resides in the cytoplasm. In terms of biological role, an accessory protein needed during the final step in the assembly of 30S ribosomal subunit, possibly for assembly of the head region. Essential for efficient processing of 16S rRNA. May be needed both before and after RbfA during the maturation of 16S rRNA. It has affinity for free ribosomal 30S subunits but not for 70S ribosomes. This chain is Ribosome maturation factor RimM, found in Sinorhizobium fredii (strain NBRC 101917 / NGR234).